Consider the following 430-residue polypeptide: C-terminal-binding protein 1 (430 aa).

Positions 1 to 59 (MSGVRPPIMNGPMHPRPLVALLDGRDCTVEMPILKDVATVAFCDAQSTQEIHEKVLNEA) are interaction with GLIS2 1. Residues Ser89, 169-174 (IGLGRV), Asp193, 226-232 (CGLNEHN), 253-255 (TAR), and Asp279 contribute to the NAD(+) site. Residue Arg255 is part of the active site. The interval 277 to 349 (ALDVHESEPF…VNKDHLTAAT (73 aa)) is interaction with GLIS2 2. Residue Glu284 is part of the active site. Ser289 carries the post-translational modification Phosphoserine. Residue His304 is the Proton donor of the active site. A disordered region spans residues 398–430 (SHGLPPVAHPPHAPSPGQTVKPEADRDHTTDQL). Position 412 is a phosphoserine (Ser412). Lys418 is covalently cross-linked (Glycyl lysine isopeptide (Lys-Gly) (interchain with G-Cter in SUMO)). The segment covering 419–430 (PEADRDHTTDQL) has biased composition (basic and acidic residues).

It belongs to the D-isomer specific 2-hydroxyacid dehydrogenase family. As to quaternary structure, homo- or heterodimer. Heterodimer with CTBP2. Interacts with ELK3 (via its PXDLS motif). Interacts with RBBP8 (via its PXDLS motif); the interaction is disrupted by binding to adenovirus E1A. Interacts with PNN, MECOM and ZFHX1B. Interacts with ZNF366 (via PXDLS motif). Interaction with SATB1 (non-acetylated form); the interaction stabilizes its attachment to DNA and promotes transcription repression. Interacts with PRDM16; the interaction represses white adipose tissue (WAT)-specific genes expression. Interacts with GLIS2, HIPK2, FOXP1, FOXP2, HDAC4, HDAC5, HDAC9, NRIP1 and WIZ. Interacts with ZNF217. Interacts with BCL6; the interaction is required for BCL6 transcriptional autoinhibition and inhibition of some BCL6 target genes. Interacts with IKZF4. Interacts with MCRIP1 (unphosphorylated form, via the PXDLS motif); competitively inhibiting CTBP-ZEB1 interaction. Interacts with Bassoon/BSN; this interaction targets and anchors CTBP1 to presynapses. Interacts with SIMC1. NAD(+) is required as a cofactor. In terms of processing, the level of phosphorylation appears to be regulated during the cell cycle. Phosphorylation by HIPK2 on Ser-412 induces proteasomal degradation. ADP-ribosylated; when cells are exposed to brefeldin A. Post-translationally, sumoylation on Lys-418 is promoted by the E3 SUMO-protein ligase CBX4.

Its subcellular location is the cytoplasm. It localises to the nucleus. The protein resides in the synapse. It is found in the synaptosome. Functionally, corepressor targeting diverse transcription regulators such as GLIS2 or BCL6. Has dehydrogenase activity. Involved in controlling the equilibrium between tubular and stacked structures in the Golgi complex. Functions in brown adipose tissue (BAT) differentiation. The polypeptide is C-terminal-binding protein 1 (Ctbp1) (Rattus norvegicus (Rat)).